The chain runs to 423 residues: Serine--tRNA ligase (423 aa).

Thr-231–Glu-233 contacts L-serine. Arg-262–Glu-264 is a binding site for ATP. Residue Glu-285 coordinates L-serine. Glu-349–Ser-352 is an ATP binding site. An L-serine-binding site is contributed by Ser-384.

It belongs to the class-II aminoacyl-tRNA synthetase family. Type-1 seryl-tRNA synthetase subfamily. Homodimer. The tRNA molecule binds across the dimer.

Its subcellular location is the cytoplasm. It carries out the reaction tRNA(Ser) + L-serine + ATP = L-seryl-tRNA(Ser) + AMP + diphosphate + H(+). It catalyses the reaction tRNA(Sec) + L-serine + ATP = L-seryl-tRNA(Sec) + AMP + diphosphate + H(+). It participates in aminoacyl-tRNA biosynthesis; selenocysteinyl-tRNA(Sec) biosynthesis; L-seryl-tRNA(Sec) from L-serine and tRNA(Sec): step 1/1. In terms of biological role, catalyzes the attachment of serine to tRNA(Ser). Is also able to aminoacylate tRNA(Sec) with serine, to form the misacylated tRNA L-seryl-tRNA(Sec), which will be further converted into selenocysteinyl-tRNA(Sec). The protein is Serine--tRNA ligase of Lactococcus lactis subsp. cremoris (strain MG1363).